A 105-amino-acid chain; its full sequence is Small ribosomal subunit protein uS10 (105 aa).

It belongs to the universal ribosomal protein uS10 family. As to quaternary structure, part of the 30S ribosomal subunit.

Involved in the binding of tRNA to the ribosomes. This chain is Small ribosomal subunit protein uS10, found in Gloeothece citriformis (strain PCC 7424) (Cyanothece sp. (strain PCC 7424)).